Consider the following 2198-residue polypeptide: RNA-directed RNA polymerase L (2198 aa).

Positions 26–284 are endonuclease; the sequence is KEALLSQVEV…AHSDSLAPEC (259 aa). Mn(2+) contacts are provided by Glu-51, Asp-89, and Glu-102. Residue Lys-115 is part of the active site. In terms of domain architecture, RdRp catalytic spans 1161-1359; sequence CDMKMAVNNG…FLSSKFNKFV (199 aa). Asp-1319 provides a ligand contact to Mg(2+).

Belongs to the Bunyavirales RNA polymerase family. Homomultimer; the oligomeric structure is essential for the polymerase activity. Interacts with nucleoprotein N. Interacts with protein Z; this interaction inhibits viral transcription and replication, Z partially blocks the product exit tunnel for the releasing nascent RNA product. Mn(2+) is required as a cofactor. It depends on Mg(2+) as a cofactor.

The protein localises to the virion. The protein resides in the host cytoplasm. It carries out the reaction RNA(n) + a ribonucleoside 5'-triphosphate = RNA(n+1) + diphosphate. In terms of biological role, RNA-dependent RNA polymerase, which is responsible for the replication and transcription of the viral RNA genome using antigenomic RNA as an intermediate. During transcription, synthesizes subgenomic RNAs and assures their capping by a cap-snatching mechanism, which involves the endonuclease activity cleaving the host capped pre-mRNAs. These short capped RNAs are then used as primers for viral transcription. The 3'-end of subgenomic mRNAs molecules are heterogeneous and not polyadenylated. The replicase function is to direct synthesis of antigenomic and genomic RNA which are encapsidated and non capped. As a consequence of the use of the same enzyme for both transcription and replication, these mechanisms need to be well coordinated. These processes may be regulated by proteins N and Z in a dose-dependent manner. Z protein inhibits the viral polymerase L und thus the viral transcription and RNA synthesis. This Homo sapiens (Human) protein is RNA-directed RNA polymerase L.